Reading from the N-terminus, the 293-residue chain is EID1-like F-box protein 1 (293 aa).

The 53-residue stretch at 16 to 68 folds into the F-box domain; it reads QCTKGHLNEDVLLLVFQHLNWNPKLVATLSCVCRWFDDFAKRVLWKEFCKTRA. Positions 245–293 are disordered; that stretch reads AIPSEDNNHTEKKQDNGFPRENVLKRRNSLLGGSENGPPPQKRLTNPNQ. Basic and acidic residues predominate over residues 250–259; the sequence is DNNHTEKKQD.

In Arabidopsis thaliana (Mouse-ear cress), this protein is EID1-like F-box protein 1 (EDL1).